The primary structure comprises 601 residues: Probable protein arginine N-methyltransferase 3 (601 aa).

A compositionally biased stretch (basic and acidic residues) spans 1-10; sequence MAATMVKHEI. Positions 1–50 are disordered; that stretch reads MAATMVKHEILNYSEDEEENYSDEGDWGDWKADDNGIEGGEEEEEDDGDD. Acidic residues-rich tracts occupy residues 14–27 and 35–50; these read SEDEEENYSDEGDW and NGIEGGEEEEEDDGDD. The segment at 57 to 78 adopts a C2H2-type zinc-finger fold; sequence CLFCDSHFVSCDLLFEHCRLSH. Positions 242–554 constitute an SAM-dependent MTase PRMT-type domain; it reads NENYFGSYSS…NDRREAIGTE (313 aa). Residues Arg264, Gly288, Glu310, Ser312, Val345, and Glu346 each contribute to the S-adenosyl-L-homocysteine site. Catalysis depends on residues Glu365 and Glu374.

It belongs to the class I-like SAM-binding methyltransferase superfamily. Protein arginine N-methyltransferase family.

It is found in the cytoplasm. The protein localises to the cytosol. The catalysed reaction is L-arginyl-[protein] + S-adenosyl-L-methionine = N(omega)-methyl-L-arginyl-[protein] + S-adenosyl-L-homocysteine + H(+). It carries out the reaction L-arginyl-[protein] + 2 S-adenosyl-L-methionine = N(omega),N(omega)-dimethyl-L-arginyl-[protein] + 2 S-adenosyl-L-homocysteine + 2 H(+). Its function is as follows. Protein-arginine N-methyltransferase that catalyzes both the monomethylation and asymmetric dimethylation of the guanidino nitrogens of arginine residues in target proteins, and therefore falls into the group of type I methyltransferases. In Arabidopsis thaliana (Mouse-ear cress), this protein is Probable protein arginine N-methyltransferase 3 (PRMT3).